We begin with the raw amino-acid sequence, 130 residues long: Small ribosomal subunit protein uS11 (130 aa).

Belongs to the universal ribosomal protein uS11 family. In terms of assembly, part of the 30S ribosomal subunit. Interacts with proteins S7 and S18. Binds to IF-3.

Its function is as follows. Located on the platform of the 30S subunit, it bridges several disparate RNA helices of the 16S rRNA. Forms part of the Shine-Dalgarno cleft in the 70S ribosome. The sequence is that of Small ribosomal subunit protein uS11 from Tropheryma whipplei (strain TW08/27) (Whipple's bacillus).